Here is a 146-residue protein sequence, read N- to C-terminus: Small ribosomal subunit protein uS5 (146 aa).

The S5 DRBM domain occupies 8 to 71 (FKEVVVNIGR…DDAFKNIIKV (64 aa)).

It belongs to the universal ribosomal protein uS5 family. In terms of assembly, part of the 30S ribosomal subunit. Contacts proteins S4 and S8.

In terms of biological role, with S4 and S12 plays an important role in translational accuracy. Its function is as follows. Located at the back of the 30S subunit body where it stabilizes the conformation of the head with respect to the body. This chain is Small ribosomal subunit protein uS5, found in Wolinella succinogenes (strain ATCC 29543 / DSM 1740 / CCUG 13145 / JCM 31913 / LMG 7466 / NCTC 11488 / FDC 602W) (Vibrio succinogenes).